Here is a 136-residue protein sequence, read N- to C-terminus: UPF0310 protein HH_1062 (136 aa).

Belongs to the UPF0310 family.

The sequence is that of UPF0310 protein HH_1062 from Helicobacter hepaticus (strain ATCC 51449 / 3B1).